We begin with the raw amino-acid sequence, 164 residues long: Polygalacturonase (164 aa).

This sequence belongs to the glycosyl hydrolase 28 family.

Its subcellular location is the secreted. The protein localises to the cell wall. It catalyses the reaction (1,4-alpha-D-galacturonosyl)n+m + H2O = (1,4-alpha-D-galacturonosyl)n + (1,4-alpha-D-galacturonosyl)m.. The protein is Polygalacturonase of Cupressus sempervirens (Italian cypress).